The following is a 198-amino-acid chain: uncharacterized protein (198 aa).

Its subcellular location is the plastid. The protein localises to the chloroplast. This is an uncharacterized protein from Antithamnion sp. (Red alga).